The sequence spans 281 residues: Probable endonuclease 4 (281 aa).

Zn(2+)-binding residues include His69, His109, Glu145, Asp179, His182, His216, Asp229, His231, and Glu261.

Belongs to the AP endonuclease 2 family. Zn(2+) serves as cofactor.

The enzyme catalyses Endonucleolytic cleavage to 5'-phosphooligonucleotide end-products.. In terms of biological role, endonuclease IV plays a role in DNA repair. It cleaves phosphodiester bonds at apurinic or apyrimidinic (AP) sites, generating a 3'-hydroxyl group and a 5'-terminal sugar phosphate. The chain is Probable endonuclease 4 from Nautilia profundicola (strain ATCC BAA-1463 / DSM 18972 / AmH).